Reading from the N-terminus, the 303-residue chain is MLDVCLLGTAGMMPLPNRWLTALSLKYNGSNILIDCGEGTQIAMKEAGINFKPIDILCITHFHADHISGLPGLLLTMGNAERTEPLTIIGPKGLTRVVTALRTIAPELPFEIKCIELNEQDEYFEMNGYHIHAFRVKHAVLCYGYSVEIKRSGRFSVERANEKEIPMRLWNPLQKGNTVEFEGRVYTPDMVLGPARKGIKVTYCTDSRPLEHIVEAAEGSDLFICEGMYAEKEKIVKAKQYKHMTFYEAADMAKRAGVKELWLTHFSPSLVRADDYMPQVRDIFANAYLGKDAKSVELMFDED.

Positions 61, 63, 65, 66, 138, 206, and 265 each coordinate Zn(2+). Asp-65 (proton acceptor) is an active-site residue.

It belongs to the RNase Z family. As to quaternary structure, homodimer. It depends on Zn(2+) as a cofactor.

It carries out the reaction Endonucleolytic cleavage of RNA, removing extra 3' nucleotides from tRNA precursor, generating 3' termini of tRNAs. A 3'-hydroxy group is left at the tRNA terminus and a 5'-phosphoryl group is left at the trailer molecule.. Functionally, zinc phosphodiesterase, which displays some tRNA 3'-processing endonuclease activity. Probably involved in tRNA maturation, by removing a 3'-trailer from precursor tRNA. This Agathobacter rectalis (strain ATCC 33656 / DSM 3377 / JCM 17463 / KCTC 5835 / VPI 0990) (Eubacterium rectale) protein is Ribonuclease Z.